A 1090-amino-acid chain; its full sequence is UPF0507 protein SCY_4172 (1090 aa).

The VPS9 domain maps to 289 to 436; sequence FSVNQLLTDF…FEDFNKNTGN (148 aa).

The protein belongs to the UPF0507 family.

The protein is UPF0507 protein SCY_4172 of Saccharomyces cerevisiae (strain YJM789) (Baker's yeast).